A 273-amino-acid chain; its full sequence is Dermonecrotic toxin LarSicTox-alphaVII1 (273 aa).

Residue H5 is part of the active site. Mg(2+) contacts are provided by E25 and D27. Residue H41 is the Nucleophile of the active site. Intrachain disulfides connect C45–C51 and C47–C192. D85 contacts Mg(2+).

The protein belongs to the arthropod phospholipase D family. Class II subfamily. Mg(2+) serves as cofactor. In terms of tissue distribution, expressed by the venom gland.

The protein resides in the secreted. The enzyme catalyses an N-(acyl)-sphingosylphosphocholine = an N-(acyl)-sphingosyl-1,3-cyclic phosphate + choline. It carries out the reaction an N-(acyl)-sphingosylphosphoethanolamine = an N-(acyl)-sphingosyl-1,3-cyclic phosphate + ethanolamine. The catalysed reaction is a 1-acyl-sn-glycero-3-phosphocholine = a 1-acyl-sn-glycero-2,3-cyclic phosphate + choline. It catalyses the reaction a 1-acyl-sn-glycero-3-phosphoethanolamine = a 1-acyl-sn-glycero-2,3-cyclic phosphate + ethanolamine. In terms of biological role, dermonecrotic toxins cleave the phosphodiester linkage between the phosphate and headgroup of certain phospholipids (sphingolipid and lysolipid substrates), forming an alcohol (often choline) and a cyclic phosphate. This toxin acts on sphingomyelin (SM). It may also act on ceramide phosphoethanolamine (CPE), lysophosphatidylcholine (LPC) and lysophosphatidylethanolamine (LPE), but not on lysophosphatidylserine (LPS), and lysophosphatidylglycerol (LPG). It acts by transphosphatidylation, releasing exclusively cyclic phosphate products as second products. Induces dermonecrosis, hemolysis, increased vascular permeability, edema, inflammatory response, and platelet aggregation. The protein is Dermonecrotic toxin LarSicTox-alphaVII1 of Loxosceles arizonica (Arizona brown spider).